A 1971-amino-acid chain; its full sequence is Germinal-center associated nuclear protein (1971 aa).

2 disordered regions span residues 1–50 (MHPV…KSLA) and 214–406 (PAFA…RGKS). Polar residues predominate over residues 8-29 (GGQQPSAFAVSSSTTGTYQTKS). Arg32 is subject to Asymmetric dimethylarginine. The FG-repeats stretch occupies residues 33–335 (FGQPSLFGQN…RPRGGTLFGR (303 aa)). 2 stretches are compositionally biased toward polar residues: residues 38–50 (LFGQNSTPSKSLA) and 214–224 (PAFASPLSNQN). The span at 232-253 (STSAFGSSNSSFSTFPTASPGS) shows a compositional bias: low complexity. Composition is skewed to basic and acidic residues over residues 288–321 (RKEDQDRSPRRHCHEAAEDPDPLSRGDHPPDKRP) and 342–359 (KSNKEAGRLGSKESKESG). The tract at residues 414–550 (EEWIYSLGGV…AAGSLLSKSS (137 aa)) is DNA primase. Residue Ser424 is modified to Phosphoserine. Lys483 and Lys484 each carry N6-acetyllysine. Residues Ser502, Ser531, and Ser550 each carry the phosphoserine modification. A PCI domain is found at 768–951 (NNENMTKCLQ…RKSVFIGRKL (184 aa)). The stretch at 1124-1162 (HVAAEEVSMERQRLEEEKQRAEEERLKQERELMLTQLSE) forms a coiled coil. The segment at 1793 to 1840 (RELQLSHGRSGMRSIHPPTSTFPTPLLHVHQKGKKKEESGREGSLSTE) is disordered.

Belongs to the SAC3 family. As to quaternary structure, component of the nuclear pore complex (NPC)-associated TREX-2 complex (transcription and export complex 2), composed of at least GANP, 2 copies of ENY2, PCID2, SEM1/DSS1, and either centrin CETN2 or centrin CETN3. The TREX-2 complex also associates with ALYREF/ALY. Interacts with RNA polymerase II subunit POLR2A and with the transcription elongation factor SUPT5H/SPT5. Interacts (via FG-repeats) with NXF1; this interaction is not mediated by RNA. Interacts with nuclear envelope proteins NUP62, NUP153 and RANBP2/NUP358; interaction with NUP153 is required for full localization at the nuclear pore complex. Interacts with several RNA helicases, including DHX9, DDX21, and DDX39A/DDX39, and with DNA topoisomerase TOP2A. Directly interacts with AICDA/AID. Interacts with the glucocorticoid receptor NR3C1. Interacts with MCM3. Post-translationally, phosphorylation at Ser-502 is induced in B-cells by CD40-stimulation, but not by bacterial lipopolysaccharide (LPS). Expressed at low levels in lymphoid organs, including thymus, spleen and lymph nodes. Up-regulated in stimulated B-cells in spleen and Peyer's patch germinal centers (at protein level).

It is found in the cytoplasm. The protein localises to the nucleus. It localises to the nucleus envelope. The protein resides in the nuclear pore complex. Its subcellular location is the nucleoplasm. It is found in the chromosome. It catalyses the reaction L-lysyl-[histone] + acetyl-CoA = N(6)-acetyl-L-lysyl-[histone] + CoA + H(+). In terms of biological role, as a component of the TREX-2 complex, involved in the export of mRNAs to the cytoplasm through the nuclear pores. Through the acetylation of histones, affects the assembly of nucleosomes at immunoglobulin variable region genes and promotes the recruitment and positioning of transcription complex to favor DNA cytosine deaminase AICDA/AID targeting, hence promoting somatic hypermutations. This is Germinal-center associated nuclear protein (Mcm3ap) from Mus musculus (Mouse).